The sequence spans 600 residues: Aspartate--tRNA(Asp/Asn) ligase (600 aa).

E174 provides a ligand contact to L-aspartate. The segment at 198-201 (QLFK) is aspartate. R220 contacts L-aspartate. Residues 220–222 (RDE) and Q229 contribute to the ATP site. Position 457 (H457) interacts with L-aspartate. ATP is bound at residue E491. Residue R498 coordinates L-aspartate. 543 to 546 (GLDR) is a binding site for ATP.

It belongs to the class-II aminoacyl-tRNA synthetase family. Type 1 subfamily. Homodimer.

Its subcellular location is the cytoplasm. It catalyses the reaction tRNA(Asx) + L-aspartate + ATP = L-aspartyl-tRNA(Asx) + AMP + diphosphate. Aspartyl-tRNA synthetase with relaxed tRNA specificity since it is able to aspartylate not only its cognate tRNA(Asp) but also tRNA(Asn). Reaction proceeds in two steps: L-aspartate is first activated by ATP to form Asp-AMP and then transferred to the acceptor end of tRNA(Asp/Asn). The protein is Aspartate--tRNA(Asp/Asn) ligase of Burkholderia cenocepacia (strain ATCC BAA-245 / DSM 16553 / LMG 16656 / NCTC 13227 / J2315 / CF5610) (Burkholderia cepacia (strain J2315)).